Reading from the N-terminus, the 301-residue chain is Homoserine kinase (301 aa).

ATP is bound at residue 89 to 99 (KPGSGLGSSSA).

The protein belongs to the GHMP kinase family. Homoserine kinase subfamily.

The protein localises to the cytoplasm. The catalysed reaction is L-homoserine + ATP = O-phospho-L-homoserine + ADP + H(+). It participates in amino-acid biosynthesis; L-threonine biosynthesis; L-threonine from L-aspartate: step 4/5. In terms of biological role, catalyzes the ATP-dependent phosphorylation of L-homoserine to L-homoserine phosphate. This is Homoserine kinase from Methanococcus maripaludis (strain DSM 14266 / JCM 13030 / NBRC 101832 / S2 / LL).